Reading from the N-terminus, the 342-residue chain is NADH-quinone oxidoreductase subunit H (342 aa).

Helical transmembrane passes span 15–35, 86–106, 119–139, 159–179, 190–210, 251–271, 277–297, and 316–336; these read LLII…LMVA, VLFI…WAVV, VGVL…IIAG, VSYE…VGSL, HVWF…SGLA, FMIC…PFDI, VPGP…FFWV, and VFLP…ELAG.

Belongs to the complex I subunit 1 family. In terms of assembly, NDH-1 is composed of 14 different subunits. Subunits NuoA, H, J, K, L, M, N constitute the membrane sector of the complex.

It localises to the cell inner membrane. The catalysed reaction is a quinone + NADH + 5 H(+)(in) = a quinol + NAD(+) + 4 H(+)(out). NDH-1 shuttles electrons from NADH, via FMN and iron-sulfur (Fe-S) centers, to quinones in the respiratory chain. The immediate electron acceptor for the enzyme in this species is believed to be ubiquinone. Couples the redox reaction to proton translocation (for every two electrons transferred, four hydrogen ions are translocated across the cytoplasmic membrane), and thus conserves the redox energy in a proton gradient. This subunit may bind ubiquinone. This Granulibacter bethesdensis (strain ATCC BAA-1260 / CGDNIH1) protein is NADH-quinone oxidoreductase subunit H.